Consider the following 74-residue polypeptide: ATP synthase subunit 9, mitochondrial (74 aa).

Transmembrane regions (helical) follow at residues 8 to 28 (MGAGAATIALAGAAIGIGNVF) and 50 to 70 (ILGFALTEAIALFALMMAFLI).

This sequence belongs to the ATPase C chain family. As to quaternary structure, F-type ATPases have 2 components, CF(1) - the catalytic core - and CF(0) - the membrane proton channel. CF(1) has five subunits: alpha(3), beta(3), gamma(1), delta(1), epsilon(1). CF(0) has three main subunits: a, b and c.

The protein resides in the mitochondrion membrane. This protein is one of the chains of the nonenzymatic membrane component (F0) of mitochondrial ATPase. The protein is ATP synthase subunit 9, mitochondrial (ATP9) of Solanum tuberosum (Potato).